The chain runs to 368 residues: Quinolinate synthase (368 aa).

The iminosuccinate site is built by His-46 and Ser-63. Cys-110 is a [4Fe-4S] cluster binding site. Iminosuccinate is bound by residues 141–143 (YVN) and Ser-162. Cys-230 lines the [4Fe-4S] cluster pocket. Residues 256-258 (HPE) and Thr-273 each bind iminosuccinate. Cys-320 contributes to the [4Fe-4S] cluster binding site.

The protein belongs to the quinolinate synthase family. Type 3 subfamily. Requires [4Fe-4S] cluster as cofactor.

The protein localises to the cytoplasm. The catalysed reaction is iminosuccinate + dihydroxyacetone phosphate = quinolinate + phosphate + 2 H2O + H(+). It participates in cofactor biosynthesis; NAD(+) biosynthesis; quinolinate from iminoaspartate: step 1/1. Functionally, catalyzes the condensation of iminoaspartate with dihydroxyacetone phosphate to form quinolinate. This Bacillus anthracis (strain A0248) protein is Quinolinate synthase.